Here is a 459-residue protein sequence, read N- to C-terminus: Antizyme inhibitor 2 (459 aa).

Residues 117–140 are necessary for polyamine uptake stimulation; it reads QVAQIKYAAKHGVRLLSFDNEVEL.

This sequence belongs to the Orn/Lys/Arg decarboxylase class-II family. ODC antizyme inhibitor subfamily. Monomer. Interacts with OAZ1, OAZ2 and OAZ3; this interaction disrupts the interaction between the antizyme and ODC1. Does not form a heterodimer with ODC1. Post-translationally, ubiquitinated, leading to its proteasomal degradation; a process that is reduced in presence of antizymes. May also be degraded through the lysosomal degradative pathway in a proteasomal-independent manner. Expressed in the medulla and chromaffin cells of the adrenal gland. Expressed in the Langerhans islets of the pancreas. Expressed in the inner part of the seminiferous tubules and in spermatozoa located in the lumen of the epididymis of the testis. Expressed in the cortex, hippocampus and cerebellum of the brain. Expressed in normal and neoplastic mast cells (MC) (at protein level). Expressed in testis, pancreas and brain. Expressed throughout the differentiation process from spermatids to spermatozoa in the inner part of the seminiferous tubules. Expressed in the kidney: expressed in the superficial (Cs) and the deep layer (Cd) of the cortex region and in the outer stripe (OS), inner stripe (IS) and the inner medulla papilla (IM) of the medulla region.

It localises to the nucleus. It is found in the cytoplasm. The protein localises to the perinuclear region. Its subcellular location is the membrane. The protein resides in the cytoplasmic vesicle. It localises to the endoplasmic reticulum-Golgi intermediate compartment. It is found in the golgi apparatus. The protein localises to the cis-Golgi network. Its subcellular location is the trans-Golgi network. The protein resides in the cytoplasmic granule. It localises to the cell projection. It is found in the axon. The protein localises to the dendrite. Its subcellular location is the perikaryon. Its function is as follows. Antizyme inhibitor (AZI) protein that positively regulates ornithine decarboxylase (ODC) activity and polyamine uptake. AZI is an enzymatically inactive ODC homolog that counteracts the negative effect of ODC antizymes (AZs) OAZ1, OAZ2 and OAZ3 on ODC activity by competing with ODC for antizyme-binding. Inhibits antizyme-dependent ODC degradation and releases ODC monomers from their inactive complex with antizymes, leading to formation of the catalytically active ODC homodimer and restoring polyamine production. Participates in the morphological integrity of the trans-Golgi network (TGN) and functions as a regulator of intracellular secretory vesicle trafficking. The polypeptide is Antizyme inhibitor 2 (Azin2) (Mus musculus (Mouse)).